A 111-amino-acid polypeptide reads, in one-letter code: Universal stress protein B (111 aa).

The next 2 membrane-spanning stretches (helical) occupy residues 1-21 (MIST…NMAR) and 90-110 (FILT…LMIW).

It belongs to the universal stress protein B family.

The protein localises to the cell inner membrane. The polypeptide is Universal stress protein B (Escherichia coli O45:K1 (strain S88 / ExPEC)).